The following is a 98-amino-acid chain: Cell cycle protein GpsB (98 aa).

Positions 34–71 form a coiled coil; the sequence is LDIVIKDYEAFQQELDELRQENARLKRQVEELQKRPTT.

Belongs to the GpsB family. In terms of assembly, forms polymers through the coiled coil domains. Interacts with PBP1, MreC and EzrA.

The protein localises to the cytoplasm. In terms of biological role, divisome component that associates with the complex late in its assembly, after the Z-ring is formed, and is dependent on DivIC and PBP2B for its recruitment to the divisome. Together with EzrA, is a key component of the system that regulates PBP1 localization during cell cycle progression. Its main role could be the removal of PBP1 from the cell pole after pole maturation is completed. Also contributes to the recruitment of PBP1 to the division complex. Not essential for septum formation. The sequence is that of Cell cycle protein GpsB from Geobacillus thermodenitrificans (strain NG80-2).